The sequence spans 415 residues: Beta-1,4-glucuronyltransferase 1 (415 aa).

Over 1–8 (MQMSYAIR) the chain is Cytoplasmic. A helical; Signal-anchor for type II membrane protein transmembrane segment spans residues 9-36 (CAFYQLLLAALMLVAMLQLLYLSLLSGL). Topologically, residues 37–415 (HGQEEQDQYF…AKYPNSPRRC (379 aa)) are lumenal. N-linked (GlcNAc...) asparagine glycosylation is present at asparagine 204. The Mn(2+) site is built by aspartate 227 and aspartate 229. An N-linked (GlcNAc...) asparagine glycan is attached at asparagine 300.

This sequence belongs to the glycosyltransferase 49 family. As to quaternary structure, interacts with LARGE1 and LARGE2. The cofactor is Mn(2+).

It is found in the golgi apparatus membrane. It carries out the reaction 3-O-[beta-D-Xyl-(1-&gt;4)-Rib-ol-P-Rib-ol-P-3-beta-D-GalNAc-(1-&gt;3)-beta-D-GlcNAc-(1-&gt;4)-(O-6-P-alpha-D-Man)]-Thr-[protein] + UDP-alpha-D-glucuronate = 3-O-[beta-D-GlcA-(1-&gt;3)-beta-D-Xyl-(1-&gt;4)-Rib-ol-P-Rib-ol-P-3-beta-D-GalNAc-(1-&gt;3)-beta-D-GlcNAc-(1-&gt;4)-(O-6-P-alpha-D-Man)]-Thr-[protein] + UDP + H(+). It participates in protein modification; protein glycosylation. Functionally, beta-1,4-glucuronyltransferase involved in O-mannosylation of alpha-dystroglycan (DAG1). Transfers a glucuronic acid (GlcA) residue onto a xylose (Xyl) acceptor to produce the glucuronyl-beta-1,4-xylose-beta disaccharide primer, which is further elongated by LARGE1, during synthesis of phosphorylated O-mannosyl glycan. Phosphorylated O-mannosyl glycan is a carbohydrate structure present in alpha-dystroglycan (DAG1), which is required for binding laminin G-like domain-containing extracellular proteins with high affinity. Required for axon guidance; via its function in O-mannosylation of alpha-dystroglycan (DAG1). In Pongo abelii (Sumatran orangutan), this protein is Beta-1,4-glucuronyltransferase 1.